A 300-amino-acid polypeptide reads, in one-letter code: GTPase Era (300 aa).

The Era-type G domain maps to 8–176 (RCGYVAIVGR…ERLVAGRLPQ (169 aa)). The tract at residues 16-23 (GRPNVGKS) is G1. 16–23 (GRPNVGKS) contacts GTP. Residues 42–46 (QTTRH) are G2. The segment at 63–66 (DTPG) is G3. Residues 63–67 (DTPGL) and 125–128 (NKAD) each bind GTP. The tract at residues 125–128 (NKAD) is G4. Positions 155 to 157 (ISA) are G5. Positions 199 to 283 (VREKIMRQLG…MLNLWVKVKG (85 aa)) constitute a KH type-2 domain.

The protein belongs to the TRAFAC class TrmE-Era-EngA-EngB-Septin-like GTPase superfamily. Era GTPase family. As to quaternary structure, monomer.

The protein localises to the cytoplasm. It is found in the cell inner membrane. In terms of biological role, an essential GTPase that binds both GDP and GTP, with rapid nucleotide exchange. Plays a role in 16S rRNA processing and 30S ribosomal subunit biogenesis and possibly also in cell cycle regulation and energy metabolism. The sequence is that of GTPase Era from Azotobacter vinelandii (strain DJ / ATCC BAA-1303).